The chain runs to 320 residues: Cytochrome f (320 aa).

The signal sequence occupies residues Met1 to Ala35. The heme site is built by Tyr36, Cys56, Cys59, and His60. Residues Ile286 to Lys306 traverse the membrane as a helical segment.

This sequence belongs to the cytochrome f family. In terms of assembly, the 4 large subunits of the cytochrome b6-f complex are cytochrome b6, subunit IV (17 kDa polypeptide, petD), cytochrome f and the Rieske protein, while the 4 small subunits are PetG, PetL, PetM and PetN. The complex functions as a dimer. Requires heme as cofactor.

It is found in the plastid. The protein resides in the chloroplast thylakoid membrane. Component of the cytochrome b6-f complex, which mediates electron transfer between photosystem II (PSII) and photosystem I (PSI), cyclic electron flow around PSI, and state transitions. The sequence is that of Cytochrome f from Welwitschia mirabilis (Tree tumbo).